We begin with the raw amino-acid sequence, 172 residues long: 3-phenylpropionate/cinnamic acid dioxygenase subunit beta (172 aa).

Belongs to the bacterial ring-hydroxylating dioxygenase beta subunit family. This dioxygenase system consists of four proteins: the two subunits of the hydroxylase component (HcaE and HcaF), a ferredoxin (HcaC) and a ferredoxin reductase (HcaD).

The catalysed reaction is 3-phenylpropanoate + NADH + O2 + H(+) = 3-(cis-5,6-dihydroxycyclohexa-1,3-dien-1-yl)propanoate + NAD(+). It carries out the reaction (E)-cinnamate + NADH + O2 + H(+) = (2E)-3-(cis-5,6-dihydroxycyclohexa-1,3-dien-1-yl)prop-2-enoate + NAD(+). It participates in aromatic compound metabolism; 3-phenylpropanoate degradation. Its function is as follows. Part of the multicomponent 3-phenylpropionate dioxygenase. Converts 3-phenylpropionic acid (PP) and cinnamic acid (CI) into 3-phenylpropionate-dihydrodiol (PP-dihydrodiol) and cinnamic acid-dihydrodiol (CI-dihydrodiol), respectively. The protein is 3-phenylpropionate/cinnamic acid dioxygenase subunit beta of Escherichia coli O17:K52:H18 (strain UMN026 / ExPEC).